The sequence spans 111 residues: Urease subunit beta (111 aa).

Belongs to the urease beta subunit family. As to quaternary structure, heterotrimer of UreA (gamma), UreB (beta) and UreC (alpha) subunits. Three heterotrimers associate to form the active enzyme.

Its subcellular location is the cytoplasm. It catalyses the reaction urea + 2 H2O + H(+) = hydrogencarbonate + 2 NH4(+). It participates in nitrogen metabolism; urea degradation; CO(2) and NH(3) from urea (urease route): step 1/1. The sequence is that of Urease subunit beta from Psychrobacter cryohalolentis (strain ATCC BAA-1226 / DSM 17306 / VKM B-2378 / K5).